Consider the following 325-residue polypeptide: MSWLTPEVIDVIIAVVKALVILFVVVGCGAFMSFGERRLLGLFQNRYGPNRVGWGGSLQLVADMIKMFFKEDWIPPFTDRVIFTLAPMIAFTSLLLAMAIVPVTSTWMGADLNIGLLFFLMMAGLAVYAVLFAGWSSNNKYSLLGAMRASAQTLSYEVFLGLSLMGVVAQAGSFNMVDIVNSQAHLWNVIPQFLGFLTFCIAGVAVCHRHPFDQPEAEQELADGYHIEYAGMKFGLFFVGEYVGIVTVSALIVTLFFGGWQGPWLPPVIWFALKTAFFMMMFILIRAALPRPRYDQVMSFGWKVCLPLTLLNLLATAAVILYTAQ.

A run of 8 helical transmembrane segments spans residues 11 to 31 (VIIA…CGAF), 81 to 101 (VIFT…MAIV), 114 to 134 (IGLL…LFAG), 154 to 174 (LSYE…AGSF), 186 to 206 (LWNV…GVAV), 237 to 257 (FFVG…TLFF), 265 to 285 (LPPV…FILI), and 304 to 324 (VCLP…LYTA).

This sequence belongs to the complex I subunit 1 family. As to quaternary structure, NDH-1 is composed of 13 different subunits. Subunits NuoA, H, J, K, L, M, N constitute the membrane sector of the complex.

The protein resides in the cell inner membrane. It carries out the reaction a quinone + NADH + 5 H(+)(in) = a quinol + NAD(+) + 4 H(+)(out). NDH-1 shuttles electrons from NADH, via FMN and iron-sulfur (Fe-S) centers, to quinones in the respiratory chain. The immediate electron acceptor for the enzyme in this species is believed to be ubiquinone. Couples the redox reaction to proton translocation (for every two electrons transferred, four hydrogen ions are translocated across the cytoplasmic membrane), and thus conserves the redox energy in a proton gradient. This subunit may bind ubiquinone. In Erwinia tasmaniensis (strain DSM 17950 / CFBP 7177 / CIP 109463 / NCPPB 4357 / Et1/99), this protein is NADH-quinone oxidoreductase subunit H.